The following is a 533-amino-acid chain: Adenylate kinase 7 (533 aa).

The tract at residues 177–426 (PVKICILGPP…EPRNYGLTDE (250 aa)) is adenylate kinase. 187–192 (AVGKSS) provides a ligand contact to ATP. The tract at residues 207-265 (QLKDVISEAIAKLETIVAPKDIGEGKEEVEEEEEEENVEDAQELLDGIKESMEQNAGQL) is NMP. Residues 242-265 (ENVEDAQELLDGIKESMEQNAGQL), 292-295 (GFPK), and glutamine 299 contribute to the AMP site. Positions 347–357 (NLPERIVAGTH) are LID. Residue arginine 365 participates in AMP binding. Residue glycine 397 coordinates ATP. Residues 419–487 (RNYGLTDEEK…EERELLEAQS (69 aa)) are a coiled coil. The interval 489-533 (PLRNYLMTYVMPTLIQGLNECCNVRPEDPVDFLAEYLFKNNPEAQ) is DPY-30.

The protein in the central section; belongs to the adenylate kinase family. In the C-terminal section; belongs to the dpy-30 family.

The protein localises to the cytoplasm. The protein resides in the cytosol. It is found in the cell projection. It localises to the cilium. Its subcellular location is the flagellum. The enzyme catalyses AMP + ATP = 2 ADP. It carries out the reaction a 2'-deoxyribonucleoside 5'-diphosphate + ATP = a 2'-deoxyribonucleoside 5'-triphosphate + ADP. It catalyses the reaction a ribonucleoside 5'-diphosphate + ATP = a ribonucleoside 5'-triphosphate + ADP. Functionally, nucleoside monophosphate (NMP) kinase that catalyzes the reversible transfer of the terminal phosphate group between nucleoside triphosphates and monophosphates. Has highest activity toward AMP, and weaker activity toward dAMP, CMP and dCMP. Also displays broad nucleoside diphosphate kinase activity. Involved in maintaining ciliary structure and function. The protein is Adenylate kinase 7 (AK7) of Macaca fascicularis (Crab-eating macaque).